The chain runs to 37 residues: Large ribosomal subunit protein bL36c (37 aa).

Belongs to the bacterial ribosomal protein bL36 family.

The protein resides in the plastid. It is found in the chloroplast. The chain is Large ribosomal subunit protein bL36c from Bigelowiella natans (Pedinomonas minutissima).